We begin with the raw amino-acid sequence, 103 residues long: MKENVAGALSYLLGPITGILFLLMEKESQFVKFHAMQSTITFAGFWVLDIALSFIPYIGVLLIPIVGLVAFITWLVCIYKAYSNEWFKLPVVGDIAEQQIGGV.

3 consecutive transmembrane segments (helical) span residues 5 to 25 (VAGA…LLME), 35 to 55 (AMQS…LSFI), and 58 to 78 (IGVL…LVCI).

It belongs to the UPF0132 family.

The protein resides in the cell membrane. The protein is UPF0132 membrane protein AF_0105 of Archaeoglobus fulgidus (strain ATCC 49558 / DSM 4304 / JCM 9628 / NBRC 100126 / VC-16).